The sequence spans 65 residues: uncharacterized protein (65 aa).

This is an uncharacterized protein from Vaccinia virus (strain Copenhagen) (VACV).